A 268-amino-acid chain; its full sequence is Small ribosomal subunit protein uS2 (268 aa).

The segment at 233-268 (SVREEEFAEAAAEGEEKPARRAPAKKAAKKGDDAQA) is disordered.

Belongs to the universal ribosomal protein uS2 family.

The protein is Small ribosomal subunit protein uS2 of Stenotrophomonas maltophilia (strain K279a).